The chain runs to 267 residues: Interleukin-15 receptor subunit alpha (267 aa).

The N-terminal stretch at 1 to 30 (MAPRRARGCRTLGLPALLLLLLLRPPATRG) is a signal peptide. The Sushi domain occupies 31–95 (ITCPPPMSVE…WTTPSLKCIR (65 aa)). The Extracellular portion of the chain corresponds to 31 to 205 (ITCPPPMSVE…VYPQGHSDTT (175 aa)). Disulfide bonds link C33–C75 and C59–C93. Residues 102–178 (QRPAPPSTVT…ESSHGTPSQT (77 aa)) form a disordered region. The span at 108 to 124 (STVTTAGVTPQPESLSP) shows a compositional bias: polar residues. The segment covering 129–145 (PAASSPSSNNTAATTAA) has biased composition (low complexity). N-linked (GlcNAc...) asparagine glycosylation occurs at N137. Residues 152–165 (LMPSKSPSTGTTEI) show a composition bias toward polar residues. Residues 206-228 (VAISTSTVLLCGLSAVSLLACYL) form a helical membrane-spanning segment. The Cytoplasmic segment spans residues 229–267 (KSRQTPPLASVEMEAMEALPVTWGTSSRDEDLENCSHHL).

In terms of assembly, the interleukin-15 receptor IL15R is a heterotrimer of IL15RA, IL2RB and IL2RG. IL15RA also self-associates. Interacts with SYK. N-glycosylated and O-glycosylated. In terms of processing, a soluble form (sIL-15RA) arises from proteolytic shedding of the membrane-anchored receptor. It also binds IL-15 and thus interferes with IL-15 binding to the membrane receptor. In terms of tissue distribution, expressed in neutrophils (at protein level). Expressed in fetal brain with higher expression in the hippocampus and cerebellum than in cortex and thalamus. Higher levels of soluble sIL-15RA form in comparison with membrane-bound forms is present in all brain structures. Isoforms 1, 3, 4, 5, 6, 7, 8 and 9: Widely expressed.

Its subcellular location is the membrane. The protein resides in the nucleus membrane. The protein localises to the cell surface. It localises to the endoplasmic reticulum membrane. It is found in the golgi apparatus membrane. Its subcellular location is the cytoplasmic vesicle membrane. The protein resides in the secreted. The protein localises to the extracellular space. In terms of biological role, high-affinity receptor for interleukin-15. Can signal both in cis and trans where IL15R from one subset of cells presents IL15 to neighboring IL2RG-expressing cells. In neutrophils, binds and activates kinase SYK in response to IL15 stimulation. In neutrophils, required for IL15-induced phagocytosis in a SYK-dependent manner. Expression of different isoforms may alter or interfere with signal transduction. Functionally, does not bind IL15. The polypeptide is Interleukin-15 receptor subunit alpha (IL15RA) (Homo sapiens (Human)).